The primary structure comprises 367 residues: tRNA uridine(34) hydroxylase (367 aa).

In terms of domain architecture, Rhodanese spans 159–253; sequence EDENSIVVDV…YAHEVSQKGL (95 aa). The active-site Cysteine persulfide intermediate is the Cys-213.

This sequence belongs to the TrhO family.

The enzyme catalyses uridine(34) in tRNA + AH2 + O2 = 5-hydroxyuridine(34) in tRNA + A + H2O. Functionally, catalyzes oxygen-dependent 5-hydroxyuridine (ho5U) modification at position 34 in tRNAs. The chain is tRNA uridine(34) hydroxylase from Leptospira interrogans serogroup Icterohaemorrhagiae serovar Lai (strain 56601).